The following is a 386-amino-acid chain: O-phospho-L-seryl-tRNA:Cys-tRNA synthase (386 aa).

Pyridoxal 5'-phosphate-binding positions include 89–90 (AR), Asn196, and 219–221 (SGH). Lys222 carries the post-translational modification N6-(pyridoxal phosphate)lysine.

This sequence belongs to the SepCysS family. Homodimer. Interacts with SepRS. The cofactor is pyridoxal 5'-phosphate.

It catalyses the reaction O-phospho-L-seryl-tRNA(Cys) + hydrogen sulfide + H(+) = L-cysteinyl-tRNA(Cys) + phosphate. In terms of biological role, converts O-phospho-L-seryl-tRNA(Cys) (Sep-tRNA(Cys)) to L-cysteinyl-tRNA(Cys) (Cys-tRNA(Cys)). The protein is O-phospho-L-seryl-tRNA:Cys-tRNA synthase of Methanosarcina mazei (strain ATCC BAA-159 / DSM 3647 / Goe1 / Go1 / JCM 11833 / OCM 88) (Methanosarcina frisia).